A 345-amino-acid chain; its full sequence is Anthranilate phosphoribosyltransferase (345 aa).

5-phospho-alpha-D-ribose 1-diphosphate is bound by residues G84, 87–88 (GD), T92, 94–97 (NIST), 112–120 (KHGGRSVSS), and S124. G84 lines the anthranilate pocket. Mg(2+) is bound at residue S96. R170 serves as a coordination point for anthranilate. Mg(2+)-binding residues include D229 and E230.

It belongs to the anthranilate phosphoribosyltransferase family. Homodimer. Requires Mg(2+) as cofactor.

The enzyme catalyses N-(5-phospho-beta-D-ribosyl)anthranilate + diphosphate = 5-phospho-alpha-D-ribose 1-diphosphate + anthranilate. It functions in the pathway amino-acid biosynthesis; L-tryptophan biosynthesis; L-tryptophan from chorismate: step 2/5. Catalyzes the transfer of the phosphoribosyl group of 5-phosphorylribose-1-pyrophosphate (PRPP) to anthranilate to yield N-(5'-phosphoribosyl)-anthranilate (PRA). The sequence is that of Anthranilate phosphoribosyltransferase from Herminiimonas arsenicoxydans.